The following is a 120-amino-acid chain: Acylphosphatase-1 (120 aa).

Ala-2 is modified (N-acetylalanine). The region spanning 8-98 is the Acylphosphatase-like domain; the sequence is SCEFEVFGRV…YGYANFHIKP (91 aa). Active-site residues include Arg-23 and Asn-41. The segment at 91–120 is disordered; that stretch reads YANFHIKPDPHENRPVHEGLGSSSSHHDSN. A compositionally biased stretch (basic and acidic residues) spans 96–107; that stretch reads IKPDPHENRPVH.

This sequence belongs to the acylphosphatase family.

The protein resides in the cytoplasm. The catalysed reaction is an acyl phosphate + H2O = a carboxylate + phosphate + H(+). The polypeptide is Acylphosphatase-1 (Acyp) (Drosophila melanogaster (Fruit fly)).